A 308-amino-acid chain; its full sequence is MPETGQEPPSAPPPPPPPKESFYIKNLLNGDPPKAAPKQPRALFAPSGKADGSGFALSQVGDLSFPRFEIPAPRFALSAHCLERAQTWWYPYALTPAGAHLPRTEAAEKSLLRDSSPASGTDRDSPEPLLQGGDAEQKERDPKSPAEIVLEESDSEEGKKEGGAEDWKKREESPEKKPCRKKKTRTVFSRSQVFQLESTFDMKRYLSSSERAGLAASLHLTETQVKIWFQNRRNKWKRQLAAELEAANLSHAAAQRIVRVPILYHENSGAESSAAGGGGPGPQPLLTFPHPVYYSHPSVTSVPLLRPV.

2 disordered regions span residues Met-1–Leu-57 and Ala-107–Thr-184. Over residues Pro-9–Lys-19 the composition is skewed to pro residues. Basic and acidic residues-rich tracts occupy residues Ala-135–Ser-144 and Glu-156–Lys-177. The homeobox DNA-binding region spans Lys-181–Leu-240.

The protein belongs to the HMX homeobox family.

The protein localises to the nucleus. Transcription factor involved in specification of neuronal cell types and which is required for inner ear and hypothalamus development. Binds to the 5'-CAAGTG-3' core sequence. This is Homeobox protein HMX3 (HMX3) from Gallus gallus (Chicken).